Here is a 163-residue protein sequence, read N- to C-terminus: Nucleotide-binding protein Acel_0286 (163 aa).

The protein belongs to the YajQ family.

In terms of biological role, nucleotide-binding protein. In Acidothermus cellulolyticus (strain ATCC 43068 / DSM 8971 / 11B), this protein is Nucleotide-binding protein Acel_0286.